The chain runs to 539 residues: MSFKSIFLTGGVVSSLGKGLTAASLALLLERQDLKVAMLKLDPYLNVDPGTMNPYEHGEVYVTDDGVETDLDLGHYHRFSSVQLSKYSTATSGQIYTKVLTKERNGEFLGSTVQVIPHVTNEIINVIQSCADHHKPDILIVEIGGTIGDIESLPFLEAVRQFRCEHPQDCLSIHMTYVPYLRAAKEIKTKPTQHSVQNLRSIGISPDVILCRSEAPLSTEVKRKISLFCNVPEHAVFNAIDLERSIYEMPLLLAKENISDFLLNKLGFSPKPLDLSDWQDLVEALCDKERQHVRIGLVGKYLEHKDAYKSVFESLFHASVPANCSLELVPIAPESEDLLEQLSQCDGCLIPGGFGTRSWEGKISAARYCRERNIPCFGICLGMQALVVEYARNVLDKPLANSMEINPETPDPVVCMMEGQDSVVKGGTMRLGAYPCRIAPGSLASAAYKTDLVQERHRHRYEVNPSYIERLEEHGLKIAGVCPLGELCEIVEIPNHRWMLGVQFHPEFLSKLAKPHPLFIEFIRAAKAYSLEKANHEHR.

The tract at residues 1–268 (MSFKSIFLTG…SDFLLNKLGF (268 aa)) is amidoligase domain. Residue S14 participates in CTP binding. UTP is bound at residue S14. 15-20 (SLGKGL) serves as a coordination point for ATP. Y55 is an L-glutamine binding site. Residue D72 coordinates ATP. 2 residues coordinate Mg(2+): D72 and E142. Residues 149–151 (DIE), 188–193 (KTKPTQ), and K224 contribute to the CTP site. UTP is bound by residues 188–193 (KTKPTQ) and K224. Residue L242 participates in ATP binding. Residues 294-532 (RIGLVGKYLE…IRAAKAYSLE (239 aa)) form the Glutamine amidotransferase type-1 domain. G353 contacts L-glutamine. C380 functions as the Nucleophile; for glutamine hydrolysis in the catalytic mechanism. L-glutamine is bound by residues 381–384 (LGMQ), E404, and R460. Residues H505 and E507 contribute to the active site.

This sequence belongs to the CTP synthase family. As to quaternary structure, homotetramer.

The catalysed reaction is UTP + L-glutamine + ATP + H2O = CTP + L-glutamate + ADP + phosphate + 2 H(+). It carries out the reaction L-glutamine + H2O = L-glutamate + NH4(+). The enzyme catalyses UTP + NH4(+) + ATP = CTP + ADP + phosphate + 2 H(+). The protein operates within pyrimidine metabolism; CTP biosynthesis via de novo pathway; CTP from UDP: step 2/2. With respect to regulation, allosterically activated by GTP, when glutamine is the substrate; GTP has no effect on the reaction when ammonia is the substrate. The allosteric effector GTP functions by stabilizing the protein conformation that binds the tetrahedral intermediate(s) formed during glutamine hydrolysis. Inhibited by the product CTP, via allosteric rather than competitive inhibition. Functionally, catalyzes the ATP-dependent amination of UTP to CTP with either L-glutamine or ammonia as the source of nitrogen. May be involved in lipopolysaccharide biosynthesis, potentially channelling CTP directly to CMP-KDO synthetase. Regulates intracellular CTP levels through interactions with the four ribonucleotide triphosphates. This Chlamydia trachomatis serovar D (strain ATCC VR-885 / DSM 19411 / UW-3/Cx) protein is CTP synthase.